A 526-amino-acid polypeptide reads, in one-letter code: Dye-decolorizing peroxidase (526 aa).

Positions 1-21 (MRKSISTFILLSVLSVGQLVA) are cleaved as a signal peptide. A propeptide spanning residues 22 to 63 (ARPRSTNAPPRRRTPQPRRTTSLFINPPALPDLPTVQAVDKL) is cleaved from the precursor. The N-linked (GlcNAc...) asparagine glycan is linked to N186. D231 (proton acceptor) is an active-site residue. N-linked (GlcNAc...) asparagine glycosylation occurs at N367. Residue H376 participates in heme binding. N473 and N484 each carry an N-linked (GlcNAc...) asparagine glycan.

Belongs to the DyP-type peroxidase family. The cofactor is heme b.

It is found in the secreted. The catalysed reaction is Reactive Blue 5 + 2 H2O2 = 2,2'-disulfonyl azobenzene + 3-[(4-amino-6-chloro-1,3,5-triazin-2-yl)amino]benzenesulfonate + phthalate + 2 H2O + 2 H(+). It catalyses the reaction 2 a phenolic donor + H2O2 = 2 a phenolic radical donor + 2 H2O. Its function is as follows. Manganese-independent peroxidase that is able to convert a large number of compounds, but its physiological substrate is not known. In addition to classic peroxidase substrates (e.g. 2,6-dimethoxyphenol), oxidizes dyes such as Reactive Blue 5 and Reactive Black 5. This Mycena epipterygia (Yellow-stemmed mycena) protein is Dye-decolorizing peroxidase.